A 293-amino-acid polypeptide reads, in one-letter code: Autophagy-related protein 36 (293 aa).

Composition is skewed to polar residues over residues 98–108 (ISSDSNKNSPP) and 260–273 (GETLNRSPSAASSS). Disordered regions lie at residues 98 to 121 (ISSDSNKNSPPSEQPAPALRNIRS) and 250 to 273 (SRSRFTDESTGETLNRSPSAASSS).

In terms of assembly, interacts with PEX3, ATG8 and ATG11.

It is found in the peroxisome. Its function is as follows. Required for autophagic breakdown of peroxisomes, called pexophagy, through linking peroxisomes to the autophagy apparatus. Involved in regulation of the glyoxylate cycle. In Saccharomyces cerevisiae (strain ATCC 204508 / S288c) (Baker's yeast), this protein is Autophagy-related protein 36 (ATG36).